The sequence spans 519 residues: DNA-directed RNA polymerase subunit Rpo2N (519 aa).

This sequence belongs to the RNA polymerase beta chain family. In terms of assembly, part of the RNA polymerase complex.

The protein localises to the cytoplasm. The catalysed reaction is RNA(n) + a ribonucleoside 5'-triphosphate = RNA(n+1) + diphosphate. Its function is as follows. DNA-dependent RNA polymerase (RNAP) catalyzes the transcription of DNA into RNA using the four ribonucleoside triphosphates as substrates. The Rpo2 subunit (Rpo2N and Rpo2C in this organism) is implicated in DNA promoter recognition and in nucleotide binding. The protein is DNA-directed RNA polymerase subunit Rpo2N of Methanothermobacter thermautotrophicus (strain ATCC 29096 / DSM 1053 / JCM 10044 / NBRC 100330 / Delta H) (Methanobacterium thermoautotrophicum).